A 1937-amino-acid polypeptide reads, in one-letter code: Myosin-8 (1937 aa).

Residues 35–84 (DAKTSVFVAEPKESYVKSVIQSKDGGKVTVKTESGATLTVKEDQVFPMNP) enclose the Myosin N-terminal SH3-like domain. 2 positions are modified to phosphothreonine: Thr-66 and Thr-71. In terms of domain architecture, Myosin motor spans 88–781 (DKIEDMAMMT…LLGLLEEMRD (694 aa)). Lys-132 bears the N6,N6,N6-trimethyllysine mark. 181-188 (GESGAGKT) lines the ATP pocket. The residue at position 389 (Tyr-389) is a Phosphotyrosine. Thr-419 bears the Phosphothreonine mark. Tyr-424 is subject to Phosphotyrosine. Ser-625 carries the post-translational modification Phosphoserine. Positions 658-680 (LNKLMTNLRSTHPHFVRCIIPNE) are actin-binding. At His-756 the chain carries Pros-methylhistidine. The tract at residues 760 to 774 (KFGHTKVFFKAGLLG) is actin-binding. An IQ domain is found at 781–813 (DEKLAQIITRTQAVCRGYLMRVEYQKMLLRRES). The stretch at 842-1937 (LLKSAETEKE…REVHTKISAE (1096 aa)) forms a coiled coil. Phosphoserine is present on residues Ser-1091 and Ser-1095. Residues 1125 to 1171 (IEAERASRAKAEKQRSDLSRELEEISERLEEAGGATSAQVEMNKKRE) are disordered. Positions 1127–1155 (AERASRAKAEKQRSDLSRELEEISERLEE) are enriched in basic and acidic residues. A phosphoserine mark is found at Ser-1161 and Ser-1236. Thr-1254 is subject to Phosphothreonine. Ser-1260 carries the post-translational modification Phosphoserine. Thr-1285 is modified (phosphothreonine). Phosphoserine is present on residues Ser-1291, Ser-1302, and Ser-1305. At Tyr-1463 the chain carries Phosphotyrosine. Position 1466 is a phosphothreonine (Thr-1466). Tyr-1491 bears the Phosphotyrosine mark. Ser-1494 carries the post-translational modification Phosphoserine. Position 1500 is a phosphothreonine (Thr-1500). A Phosphoserine modification is found at Ser-1513. Position 1516 is a phosphothreonine (Thr-1516). Residues Ser-1553, Ser-1573, Ser-1602, Ser-1713, and Ser-1725 each carry the phosphoserine modification. Phosphothreonine is present on Thr-1729. At Ser-1738 the chain carries Phosphoserine.

This sequence belongs to the TRAFAC class myosin-kinesin ATPase superfamily. Myosin family. In terms of assembly, muscle myosin is a hexameric protein that consists of 2 heavy chain subunits (MHC), 2 alkali light chain subunits (MLC) and 2 regulatory light chain subunits (MLC-2).

The protein resides in the cytoplasm. The protein localises to the myofibril. Its function is as follows. Muscle contraction. The chain is Myosin-8 (Myh8) from Mus musculus (Mouse).